A 158-amino-acid polypeptide reads, in one-letter code: Transcriptional repressor NrdR (158 aa).

A zinc finger lies at 3–34 (CPYCGYPDSRVIDSRPTDDNTAIRRRRECLKC). Residues 49 to 139 (ILVIKKDNRR…VYRQFKDINT (91 aa)) enclose the ATP-cone domain.

Belongs to the NrdR family. Requires Zn(2+) as cofactor.

Negatively regulates transcription of bacterial ribonucleotide reductase nrd genes and operons by binding to NrdR-boxes. This is Transcriptional repressor NrdR from Caldanaerobacter subterraneus subsp. tengcongensis (strain DSM 15242 / JCM 11007 / NBRC 100824 / MB4) (Thermoanaerobacter tengcongensis).